A 566-amino-acid polypeptide reads, in one-letter code: Osteoclast stimulatory transmembrane protein (566 aa).

The Cytoplasmic segment spans residues 1 to 51 (MPGHPGAAEQLVKTGWRSWHLGFWKALAPLQAAWDAFSQPVPASCGQLLTQ). A helical membrane pass occupies residues 52 to 72 (LLLCASLAAAAAGLVYHWLAS). The Extracellular portion of the chain corresponds to 73 to 81 (LLLYPPGPS). A helical transmembrane segment spans residues 82 to 102 (AMVATVCGLLVFLSLGLVPPV). Topologically, residues 103–128 (RCLFALSVPTLGMEQGRRLLLSYSTA) are cytoplasmic. A helical membrane pass occupies residues 129–149 (TLAIAVVPNVLANVGAAGQVL). Residues 150-227 (RCVTEGSLES…ARAAALGTQR (78 aa)) lie on the Extracellular side of the membrane. A helical membrane pass occupies residues 228–248 (VVTGLFMLGLLVESAWYLHCY). The Cytoplasmic portion of the chain corresponds to 249 to 304 (LTDLRFDNIYATQQLTQRLAQAQATHLLAPPPTWLLQAAQLRLSQEELLSCLLRLG). The helical transmembrane segment at 305-325 (LLALLLVATAVAVATDHVAFL) threads the bilayer. Residues 326–398 (LAQATVDWAQ…CPLLPARRPR (73 aa)) are Extracellular-facing. A helical transmembrane segment spans residues 399-419 (AAAPLAAGALQLLAGSTVLLE). The Cytoplasmic portion of the chain corresponds to 420-566 (AYARRLRHAI…EGNTGHDRPG (147 aa)).

Its subcellular location is the membrane. In terms of biological role, probable cell surface receptor that plays a role in cellular fusion and cell differentiation. Cooperates with DCSTAMP in modulating cell-cell fusion in both osteoclasts and foreign body giant cells (FBGCs). Involved in osteoclast bone resorption. Promotes osteoclast differentiation and may play a role in the multinucleated osteoclast maturation. The protein is Osteoclast stimulatory transmembrane protein (OCSTAMP) of Homo sapiens (Human).